The primary structure comprises 175 residues: Transcription factor E (175 aa).

The 86-residue stretch at 3–88 (ENPLIQQVLF…TWKPSLEKVP (86 aa)) folds into the HTH TFE/IIEalpha-type domain.

The protein belongs to the TFE family. Monomer. Interaction with RNA polymerase subunits RpoF and RpoE is necessary for Tfe stimulatory transcription activity. Able to interact with Tbp and RNA polymerase in the absence of DNA promoter. Interacts both with the preinitiation and elongation complexes.

Transcription factor that plays a role in the activation of archaeal genes transcribed by RNA polymerase. Facilitates transcription initiation by enhancing TATA-box recognition by TATA-box-binding protein (Tbp), and transcription factor B (Tfb) and RNA polymerase recruitment. Not absolutely required for transcription in vitro, but particularly important in cases where Tbp or Tfb function is not optimal. It dynamically alters the nucleic acid-binding properties of RNA polymerases by stabilizing the initiation complex and destabilizing elongation complexes. Seems to translocate with the RNA polymerase following initiation and acts by binding to the non template strand of the transcription bubble in elongation complexes. This is Transcription factor E from Methanococcus maripaludis (strain C7 / ATCC BAA-1331).